The chain runs to 490 residues: Nicotinate phosphoribosyltransferase (490 aa).

Position 206 is a phosphohistidine (His206).

It belongs to the NAPRTase family. Transiently phosphorylated on a His residue during the reaction cycle. Phosphorylation strongly increases the affinity for substrates and increases the rate of nicotinate D-ribonucleotide production. Dephosphorylation regenerates the low-affinity form of the enzyme, leading to product release.

It catalyses the reaction nicotinate + 5-phospho-alpha-D-ribose 1-diphosphate + ATP + H2O = nicotinate beta-D-ribonucleotide + ADP + phosphate + diphosphate. It participates in cofactor biosynthesis; NAD(+) biosynthesis; nicotinate D-ribonucleotide from nicotinate: step 1/1. Catalyzes the synthesis of beta-nicotinate D-ribonucleotide from nicotinate and 5-phospho-D-ribose 1-phosphate at the expense of ATP. This chain is Nicotinate phosphoribosyltransferase (pncB), found in Bacillus subtilis (strain 168).